The sequence spans 105 residues: Flower-specific defensin (105 aa).

The signal sequence occupies residues M1 to A25. Intrachain disulfides connect C28–C72, C39–C59, C45–C66, and C49–C68. Positions V73–N105 are cleaved as a propeptide — removed in mature form.

This sequence belongs to the DEFL family. In terms of tissue distribution, most abundant in the epidermal cell layers of the petals and sepals, within the connective cells of the anthers, and the cortical cells of the style. Not detected in the tapetum, pollen mother cells, the transmitting tissue, the vascular bundles of the anther and style or in leaves. Expressed also in ovaries, but barley detectable in roots.

The protein localises to the secreted. It localises to the vacuole. Its function is as follows. Plant defense peptide with antifungal activity against F.oxysporum and B.cinerea. Retards the growth of the Lepidopteran insect pests H.armigera and H.punctigera. The chain is Flower-specific defensin (D1) from Nicotiana alata (Winged tobacco).